Consider the following 317-residue polypeptide: Transaldolase (317 aa).

Residue lysine 126 is the Schiff-base intermediate with substrate of the active site.

This sequence belongs to the transaldolase family. Type 1 subfamily. As to quaternary structure, homodimer.

Its subcellular location is the cytoplasm. The catalysed reaction is D-sedoheptulose 7-phosphate + D-glyceraldehyde 3-phosphate = D-erythrose 4-phosphate + beta-D-fructose 6-phosphate. The protein operates within carbohydrate degradation; pentose phosphate pathway; D-glyceraldehyde 3-phosphate and beta-D-fructose 6-phosphate from D-ribose 5-phosphate and D-xylulose 5-phosphate (non-oxidative stage): step 2/3. Transaldolase is important for the balance of metabolites in the pentose-phosphate pathway. The polypeptide is Transaldolase (Burkholderia thailandensis (strain ATCC 700388 / DSM 13276 / CCUG 48851 / CIP 106301 / E264)).